The following is a 100-amino-acid chain: Small ribosomal subunit protein uS14c (100 aa).

Belongs to the universal ribosomal protein uS14 family. Part of the 30S ribosomal subunit.

It is found in the plastid. The protein localises to the chloroplast. Functionally, binds 16S rRNA, required for the assembly of 30S particles. This Chara vulgaris (Common stonewort) protein is Small ribosomal subunit protein uS14c.